Consider the following 136-residue polypeptide: Small ribosomal subunit protein uS9 (136 aa).

Belongs to the universal ribosomal protein uS9 family.

The sequence is that of Small ribosomal subunit protein uS9 from Borrelia turicatae (strain 91E135).